The sequence spans 662 residues: UvrABC system protein B (662 aa).

A Helicase ATP-binding domain is found at 31 to 188 (DNIEGGEKAQ…NDLVDIQFER (158 aa)). 44–51 (GATGTGKT) contacts ATP. The Beta-hairpin signature appears at 97–120 (YYDYYQPEAYVPSSDTYIEKDSSV). Positions 435 to 601 (QIDDLLGEIN…TIKKEIRDLI (167 aa)) constitute a Helicase C-terminal domain. The region spanning 626–661 (KELVKKLEKQMQEAVEVLDFELAAQIRDMMLEVKAL) is the UVR domain.

Belongs to the UvrB family. Forms a heterotetramer with UvrA during the search for lesions. Interacts with UvrC in an incision complex.

Its subcellular location is the cytoplasm. In terms of biological role, the UvrABC repair system catalyzes the recognition and processing of DNA lesions. A damage recognition complex composed of 2 UvrA and 2 UvrB subunits scans DNA for abnormalities. Upon binding of the UvrA(2)B(2) complex to a putative damaged site, the DNA wraps around one UvrB monomer. DNA wrap is dependent on ATP binding by UvrB and probably causes local melting of the DNA helix, facilitating insertion of UvrB beta-hairpin between the DNA strands. Then UvrB probes one DNA strand for the presence of a lesion. If a lesion is found the UvrA subunits dissociate and the UvrB-DNA preincision complex is formed. This complex is subsequently bound by UvrC and the second UvrB is released. If no lesion is found, the DNA wraps around the other UvrB subunit that will check the other stand for damage. The sequence is that of UvrABC system protein B from Streptococcus pneumoniae serotype 2 (strain D39 / NCTC 7466).